A 513-amino-acid polypeptide reads, in one-letter code: Probable DNA primase large subunit (513 aa).

Residues cysteine 315, cysteine 398, cysteine 415, and cysteine 457 each coordinate [4Fe-4S] cluster.

Belongs to the eukaryotic-type primase large subunit family. As to quaternary structure, heterodimer of a small subunit and a large subunit. Requires [4Fe-4S] cluster as cofactor.

DNA primase is the polymerase that synthesizes small RNA primers for the Okazaki fragments made during discontinuous DNA replication. The chain is Probable DNA primase large subunit from Neurospora crassa (strain ATCC 24698 / 74-OR23-1A / CBS 708.71 / DSM 1257 / FGSC 987).